The chain runs to 80 residues: Beta-toxin KAaH1 (80 aa).

A signal peptide spans 1–22 (MMKLMLFSIIVILFSLIGSIHG). The region spanning 25–80 (VPGNYPLDSSDDTYLCAPLGENPFCIKICRKHGVKYGYCYAFQCWCEYLEDKNVKI) is the LCN-type CS-alpha/beta domain. Cystine bridges form between cysteine 40/cysteine 63, cysteine 49/cysteine 68, and cysteine 53/cysteine 70.

The protein belongs to the long (3 C-C) scorpion toxin superfamily. Sodium/Potassium channel inhibitor family. In terms of tissue distribution, expressed by the venom gland.

The protein resides in the secreted. Functionally, inhibits the vertebrate potassium channels Kv1.1/KCNA1 and Kv1.3/KCNA3 in vitro with an IC(50) of 5.3 nM and 50.0 nM respectively. In Androctonus australis (Sahara scorpion), this protein is Beta-toxin KAaH1.